The sequence spans 649 residues: Acetyl-coenzyme A synthetase (649 aa).

CoA is bound by residues 191 to 194 (RGGR), Thr-309, and Asn-333. Residues 385 to 387 (GEP), 409 to 414 (DTWWQT), Asp-498, and Arg-513 each bind ATP. A CoA-binding site is contributed by Ser-521. Residue Arg-524 coordinates ATP. Residues Val-535, His-537, and Val-540 each coordinate Mg(2+). Arg-582 is a binding site for CoA. Lys-607 carries the N6-acetyllysine modification.

It belongs to the ATP-dependent AMP-binding enzyme family. The cofactor is Mg(2+). In terms of processing, acetylated. Deacetylation by the SIR2-homolog deacetylase activates the enzyme.

The enzyme catalyses acetate + ATP + CoA = acetyl-CoA + AMP + diphosphate. Catalyzes the conversion of acetate into acetyl-CoA (AcCoA), an essential intermediate at the junction of anabolic and catabolic pathways. AcsA undergoes a two-step reaction. In the first half reaction, AcsA combines acetate with ATP to form acetyl-adenylate (AcAMP) intermediate. In the second half reaction, it can then transfer the acetyl group from AcAMP to the sulfhydryl group of CoA, forming the product AcCoA. The protein is Acetyl-coenzyme A synthetase of Novosphingobium aromaticivorans (strain ATCC 700278 / DSM 12444 / CCUG 56034 / CIP 105152 / NBRC 16084 / F199).